The sequence spans 342 residues: UDP-3-O-acylglucosamine N-acyltransferase (342 aa).

The active-site Proton acceptor is the His243.

Belongs to the transferase hexapeptide repeat family. LpxD subfamily. Homotrimer.

It catalyses the reaction a UDP-3-O-[(3R)-3-hydroxyacyl]-alpha-D-glucosamine + a (3R)-hydroxyacyl-[ACP] = a UDP-2-N,3-O-bis[(3R)-3-hydroxyacyl]-alpha-D-glucosamine + holo-[ACP] + H(+). Its pathway is bacterial outer membrane biogenesis; LPS lipid A biosynthesis. Catalyzes the N-acylation of UDP-3-O-acylglucosamine using 3-hydroxyacyl-ACP as the acyl donor. Is involved in the biosynthesis of lipid A, a phosphorylated glycolipid that anchors the lipopolysaccharide to the outer membrane of the cell. The sequence is that of UDP-3-O-acylglucosamine N-acyltransferase from Coxiella burnetii (strain CbuK_Q154) (Coxiella burnetii (strain Q154)).